Here is a 160-residue protein sequence, read N- to C-terminus: tRNA (cytidine(56)-2'-O)-methyltransferase (160 aa).

Residues L68, 94–98 (GAEKV), and 112–119 (IGNQPHSE) contribute to the S-adenosyl-L-methionine site.

The protein belongs to the aTrm56 family. Homodimer.

The protein resides in the cytoplasm. The enzyme catalyses cytidine(56) in tRNA + S-adenosyl-L-methionine = 2'-O-methylcytidine(56) in tRNA + S-adenosyl-L-homocysteine + H(+). Its function is as follows. Specifically catalyzes the AdoMet-dependent 2'-O-ribose methylation of cytidine at position 56 in tRNAs. The sequence is that of tRNA (cytidine(56)-2'-O)-methyltransferase from Saccharolobus solfataricus (strain ATCC 35092 / DSM 1617 / JCM 11322 / P2) (Sulfolobus solfataricus).